A 1249-amino-acid chain; its full sequence is Hyphally regulated cell wall protein 3 (1249 aa).

An N-terminal signal peptide occupies residues 1–20; the sequence is MHLFKRIALTLWLIISSTLA. Residue Asn373 is glycosylated (N-linked (GlcNAc...) asparagine). Residues 383–415 are compositionally biased toward low complexity; it reads FPTTSQSSSSETVASSSQPDSSSTEPSAFPSST. 2 disordered regions span residues 383 to 729 and 883 to 1217; these read FPTT…SGII and GLST…SSAS. Positions 416-428 are enriched in polar residues; sequence GDSSAEPSITSDY. Over residues 429-716 the composition is skewed to low complexity; that stretch reads SSSELSVVPS…SEYTATWTTT (288 aa). Residue Asn681 is glycosylated (N-linked (GlcNAc...) asparagine). Polar residues-rich tracts occupy residues 717-729 and 883-935; these read NSDGSVSTESGII and GLST…PVPT. N-linked (GlcNAc...) asparagine glycosylation is found at Asn891, Asn940, Asn944, Asn948, Asn952, Asn956, Asn960, Asn966, Asn970, Asn974, Asn984, Asn988, Asn992, Asn996, Asn1000, Asn1010, Asn1014, Asn1018, Asn1022, Asn1026, Asn1032, Asn1046, Asn1050, Asn1058, Asn1062, Asn1072, Asn1076, Asn1080, Asn1086, Asn1090, Asn1094, Asn1098, Asn1114, Asn1118, Asn1122, Asn1128, Asn1132, Asn1136, Asn1140, Asn1150, Asn1154, Asn1158, Asn1172, Asn1180, and Asn1186. Residues 941 to 959 are compositionally biased toward low complexity; the sequence is GSNNGSDNGSNNGSNNGSN. Residues 960 to 982 show a composition bias toward gly residues; the sequence is NGSGSGNGSNNGSNNGSGSGNGF. Positions 983–1043 are enriched in low complexity; sequence NNGSDNGSNN…SNSGSDSGNG (61 aa). A compositionally biased stretch (gly residues) spans 1062-1078; the sequence is NGSGSGGESNNGSGNGS. Low complexity predominate over residues 1079 to 1097; that stretch reads DNGSSPDNGSNNGSNNGSN. Over residues 1139 to 1167 the composition is skewed to low complexity; that stretch reads NNGSNSGSNSDNGSNNSSGNGSSSDLGSV. Low complexity-rich tracts occupy residues 1175–1194 and 1205–1217; these read NEGSSNESGANNGSNNGAGA and SPSADSGSTSSAS. An N-linked (GlcNAc...) asparagine glycan is attached at Asn1225. Asn1225 carries the GPI-anchor amidated asparagine lipid modification. The propeptide at 1226-1249 is removed in mature form; it reads GSGKLLNGKVLTLSVLSSMVVVFL.

It belongs to the HYR1/IFF family. In terms of processing, the GPI-anchor is attached to the protein in the endoplasmic reticulum and serves to target the protein to the cell surface. There, the glucosamine-inositol phospholipid moiety is cleaved off and the GPI-modified mannoprotein is covalently attached via its lipidless GPI glycan remnant to the 1,6-beta-glucan of the outer cell wall layer.

Its subcellular location is the secreted. It is found in the cell wall. It localises to the membrane. Its function is as follows. GPI-anchored cell wall protein involved in cell wall organization, hyphal growth, as well as in host-fungal interaction and virulence. The protein is Hyphally regulated cell wall protein 3 (HYR3) of Candida albicans (strain SC5314 / ATCC MYA-2876) (Yeast).